The primary structure comprises 324 residues: tRNA dimethylallyltransferase (324 aa).

18–25 contributes to the ATP binding site; it reads GPTAVGKT. Position 20 to 25 (20 to 25) interacts with substrate; it reads TAVGKT. Residues 43–46 are interaction with substrate tRNA; the sequence is DSRQ.

Belongs to the IPP transferase family. In terms of assembly, monomer. Mg(2+) serves as cofactor.

It carries out the reaction adenosine(37) in tRNA + dimethylallyl diphosphate = N(6)-dimethylallyladenosine(37) in tRNA + diphosphate. Catalyzes the transfer of a dimethylallyl group onto the adenine at position 37 in tRNAs that read codons beginning with uridine, leading to the formation of N6-(dimethylallyl)adenosine (i(6)A). This is tRNA dimethylallyltransferase from Salinibacter ruber (strain DSM 13855 / M31).